The primary structure comprises 496 residues: Glutamyl-tRNA(Gln) amidotransferase subunit A (496 aa).

Residues K75 and S150 each act as charge relay system in the active site. The Acyl-ester intermediate role is filled by S174.

The protein belongs to the amidase family. GatA subfamily. Heterotrimer of A, B and C subunits.

It catalyses the reaction L-glutamyl-tRNA(Gln) + L-glutamine + ATP + H2O = L-glutaminyl-tRNA(Gln) + L-glutamate + ADP + phosphate + H(+). Functionally, allows the formation of correctly charged Gln-tRNA(Gln) through the transamidation of misacylated Glu-tRNA(Gln) in organisms which lack glutaminyl-tRNA synthetase. The reaction takes place in the presence of glutamine and ATP through an activated gamma-phospho-Glu-tRNA(Gln). The polypeptide is Glutamyl-tRNA(Gln) amidotransferase subunit A (Burkholderia pseudomallei (strain 668)).